The sequence spans 235 residues: Cell division protein FtsQ (235 aa).

Topologically, residues 1 to 6 (MERLTR) are cytoplasmic. A helical transmembrane segment spans residues 7–25 (WLLVMMAMLLAASGLVWFY). Residues 26-235 (NSNHLPVKQV…DGLPEKESEE (210 aa)) lie on the Periplasmic side of the membrane. The region spanning 30–99 (LPVKQVSLKG…DTVEVVLTER (70 aa)) is the POTRA domain.

Belongs to the FtsQ/DivIB family. FtsQ subfamily. Part of a complex composed of FtsB, FtsL and FtsQ.

The protein localises to the cell inner membrane. Functionally, essential cell division protein. May link together the upstream cell division proteins, which are predominantly cytoplasmic, with the downstream cell division proteins, which are predominantly periplasmic. May control correct divisome assembly. In Neisseria meningitidis serogroup B (strain ATCC BAA-335 / MC58), this protein is Cell division protein FtsQ.